The following is a 585-amino-acid chain: Protein FAM83D (585 aa).

Residues 1–296 (MAARFELLDD…LYAQSEPISS (296 aa)) form a DUF1669 region. The residue at position 295 (S295) is a Phosphoserine. Disordered stretches follow at residues 334 to 411 (LSST…TSSS) and 425 to 482 (AASS…SQGS). The interval 337-585 (TPRKSNLGPE…RDIALYPPYQ (249 aa)) is required for interaction with KIF22 and function in chromosome congression. Basic and acidic residues-rich tracts occupy residues 347–360 (EPPKDRAKPKRPDS) and 369–383 (DYFHSHKDQLEDSKV). A compositionally biased stretch (polar residues) spans 425–441 (AASSQATVWSKSTTTQT). A Phosphoserine modification is found at S458. Residues 458–482 (SPASKMSVSRSSSVRSSSSVSSQGS) are compositionally biased toward low complexity. The residue at position 511 (T511) is a Phosphothreonine.

This sequence belongs to the FAM83 family. In terms of assembly, interacts with FBXW7; promotes FBXW7 degradation. May interact with RAF1. Interacts with KIF22; recruits KIF22 to mitotic spindle microtubules. Interacts (via C-terminus) with DYNLL1. Interacts with HMMR. Directly interacts (via DUF1669) with CSNK1A1 and CSNK1A1L. In terms of processing, phosphorylated during mitosis.

Its subcellular location is the cytoplasm. It localises to the cytoskeleton. The protein localises to the spindle. It is found in the spindle pole. Through the degradation of FBXW7, may act indirectly on the expression and downstream signaling of MTOR, JUN and MYC. May play also a role in cell proliferation through activation of the ERK1/ERK2 signaling cascade. May also be important for proper chromosome congression and alignment during mitosis through its interaction with KIF22. The chain is Protein FAM83D from Mus musculus (Mouse).